We begin with the raw amino-acid sequence, 375 residues long: Chaperone protein DnaJ (375 aa).

In terms of domain architecture, J spans D5 to G70. The CR-type zinc-finger motif lies at G134–Q216. Residues C147, C150, C164, C167, C190, C193, C204, and C207 each coordinate Zn(2+). 4 CXXCXGXG motif repeats span residues C147–G154, C164–G171, C190–G197, and C204–G211.

The protein belongs to the DnaJ family. Homodimer. Zn(2+) is required as a cofactor.

It localises to the cytoplasm. Participates actively in the response to hyperosmotic and heat shock by preventing the aggregation of stress-denatured proteins and by disaggregating proteins, also in an autonomous, DnaK-independent fashion. Unfolded proteins bind initially to DnaJ; upon interaction with the DnaJ-bound protein, DnaK hydrolyzes its bound ATP, resulting in the formation of a stable complex. GrpE releases ADP from DnaK; ATP binding to DnaK triggers the release of the substrate protein, thus completing the reaction cycle. Several rounds of ATP-dependent interactions between DnaJ, DnaK and GrpE are required for fully efficient folding. Also involved, together with DnaK and GrpE, in the DNA replication of plasmids through activation of initiation proteins. The sequence is that of Chaperone protein DnaJ from Clostridium tetani (strain Massachusetts / E88).